Reading from the N-terminus, the 511-residue chain is Keratin, type II cytoskeletal 72 (511 aa).

The head stretch occupies residues 1-124 (MSRQLTHFPR…DPEIQRVRAQ (124 aa)). The coil 1A stretch occupies residues 125-160 (EREQIKALNNKFASFIDKVRFLEQQNQVLETKWNLL). The IF rod domain maps to 125 to 438 (EREQIKALNN…KLLESEECRM (314 aa)). The segment at 161-179 (QQLDLNNCRKNLEPIYEGY) is linker 1. The coil 1B stretch occupies residues 180–271 (ISNLQKQLEM…CLYEGEITQI (92 aa)). The interval 272–295 (QSHISDTSIVLSMDNNRDLDLDSI) is linker 12. A coil 2 region spans residues 296-434 (IAEVRAQYEE…ATYRKLLESE (139 aa)). The segment at 435–511 (ECRMSGEYPN…SSCATKKASR (77 aa)) is tail. Residues 486-511 (GSCGSELKDPLAKTSGSSCATKKASR) form a disordered region.

Belongs to the intermediate filament family. Heterotetramer of two type I and two type II keratins. Highly expressed in hair follicles from scalp and eyebrow. Also expressed in palmoplantar epidermis. Not expressed in face skin despite the presence of fine hairs histologically. In hair, it is specifically present in the inner root sheath (IRS) of the hair follicle. Present in the IRS cuticle, but not in Henle or Huxley layers of the IRS. In the IRS cuticle, its presence is delayed up to the height of the apex of the dermal papilla (at protein level).

Has a role in hair formation. Specific component of keratin intermediate filaments in the inner root sheath (IRS) of the hair follicle. This is Keratin, type II cytoskeletal 72 (KRT72) from Homo sapiens (Human).